Consider the following 518-residue polypeptide: DNA-binding protein D-ETS-4 (518 aa).

Disordered stretches follow at residues 74–113 (SQPI…QSSP) and 152–172 (LPPS…SCGE). Residues 84–94 (TAPYTNPSSHQ) are compositionally biased toward polar residues. The segment covering 102 to 113 (PHSAYPSPQSSP) has biased composition (low complexity). Residues 158 to 171 (ESNCETPSPRSSCG) are compositionally biased toward polar residues. Residues 258–344 (HAKREADAIC…AQLEIWKMAY (87 aa)) form the PNT domain. The segment at 393 to 426 (APLNGSTTSPPATNASNGGTATVKRPNGGRTGGG) is disordered. Positions 396–412 (NGSTTSPPATNASNGGT) are enriched in polar residues. Residues 430 to 513 (IHLWQFLKEL…RSQRLVYQFC (84 aa)) constitute a DNA-binding region (ETS).

Belongs to the ETS family. In terms of tissue distribution, transient high expression in pole cells during embryonic stages 8-11.

It is found in the nucleus. Its function is as follows. May have a role in germline development. This chain is DNA-binding protein D-ETS-4 (Ets98B), found in Drosophila melanogaster (Fruit fly).